The primary structure comprises 476 residues: MTASTATETLLHKGSGLQVVVGLGQSGLSVAHYLAEQGYQVAVTDNQENPALADKLPATIDIRQFGAIDAELLQQAARIIISPGISLDNDAIAAARAANIPVVSDIQLFCEACTVPIVAITGSNAKSTVTTLVGQMAADAGINVGVGGNIGVPALSLLSNDKMELAVIELSSFQLETVTNLGAQVATVLNMSPDHLDRHGDMLGYHQAKHRIFQGAKSVVINREDALTRPLVSDSLPRLSTGIHAPNKGHYGLITDAAGQTYLARGTERLISADKLKIKGRHNLLNAQAALALGELAGLPLESMLSTLQQFAGLEHRCQYVATIAGIDYFNDSKGTNIGSTMAAVEGLGAVYAPKDGKLLLILGGQGKAQQFGELSPFINQYVSQVLFIGEDSQQIEQHLRAAGLSDEVSLHQCQTLENAFSMIEQVTASSLSQVQAVLLSPACASFDQFNGFVARGERFSQLVKQLNTVSQQALS.

122–128 provides a ligand contact to ATP; the sequence is GSNAKST.

The protein belongs to the MurCDEF family.

The protein localises to the cytoplasm. The enzyme catalyses UDP-N-acetyl-alpha-D-muramoyl-L-alanine + D-glutamate + ATP = UDP-N-acetyl-alpha-D-muramoyl-L-alanyl-D-glutamate + ADP + phosphate + H(+). It participates in cell wall biogenesis; peptidoglycan biosynthesis. In terms of biological role, cell wall formation. Catalyzes the addition of glutamate to the nucleotide precursor UDP-N-acetylmuramoyl-L-alanine (UMA). The chain is UDP-N-acetylmuramoylalanine--D-glutamate ligase from Psychrobacter arcticus (strain DSM 17307 / VKM B-2377 / 273-4).